Consider the following 433-residue polypeptide: MVNVVLGSQWGDEGKGKLVDLLVSKYDIVARSAGGNNAGHTIVVGGIKYDFHMLPSGLVNPNCQNLIGNGVVIHVPSFFGELEQLEAKGLRDARGRLFISSRAHLVFDFHQRTDKLRELELSGKSKDGKNIGTTGKGIGPTYSTKASRSGLRVHHLVSEQPEAWAEFETKYRRLLETRQQRYGPFEHDAEEELARYRRYREELRPFVVDSVVFMHNAIQQKKKILVEGANALMLDIDFGTYPYVTSSSTGIGGVLTGLGIPPRCIDEIYGVVKAYTTRVGEGPFPTEQLNEAGDKLQTIGAEYGVTTGRKRRCGWLDLVVLKYSTLINGFTSLNITKLDVLDTFKEIKVGISYSLNGKKLDLFPEDLLVLSKVDVEYVTLPGWDEDITKISRYEDLPENAKSYLKFIEDFVGVPVEWVGTGPGRESMLHKEVS.

GTP contacts are provided by residues 11–17 (GDEGKGK) and 39–41 (GHT). Asp12 serves as the catalytic Proton acceptor. Residues Asp12 and Gly39 each contribute to the Mg(2+) site. Residues 12-15 (DEGK), 37-40 (NAGH), Thr134, Arg148, Asn230, Thr245, and Arg309 each bind IMP. The active-site Proton donor is the His40. 305 to 311 (VTTGRKR) lines the substrate pocket. Residues Arg311, 337-339 (KLD), and 419-421 (GTG) each bind GTP.

Belongs to the adenylosuccinate synthetase family. Homodimer. Requires Mg(2+) as cofactor.

Its subcellular location is the cytoplasm. It catalyses the reaction IMP + L-aspartate + GTP = N(6)-(1,2-dicarboxyethyl)-AMP + GDP + phosphate + 2 H(+). Its pathway is purine metabolism; AMP biosynthesis via de novo pathway; AMP from IMP: step 1/2. Its function is as follows. Plays an important role in the de novo pathway and in the salvage pathway of purine nucleotide biosynthesis. Catalyzes the first committed step in the biosynthesis of AMP from IMP. In Eremothecium gossypii (strain ATCC 10895 / CBS 109.51 / FGSC 9923 / NRRL Y-1056) (Yeast), this protein is Adenylosuccinate synthetase.